We begin with the raw amino-acid sequence, 504 residues long: 26S proteasome non-ATPase regulatory subunit 5 (504 aa).

At Ala-2 the chain carries N-acetylalanine.

It belongs to the proteasome subunit S5B/HSM3 family. In terms of assembly, interacts with PSMC1, PSMC2, PSMD1 and PSMD6. Part of transient complex containing PSMD5, PSMC2, PSMC1 and PSMD2 formed during the assembly of the 26S proteasome.

Functionally, acts as a chaperone during the assembly of the 26S proteasome, specifically of the base subcomplex of the PA700/19S regulatory complex (RC). In the initial step of the base subcomplex assembly is part of an intermediate PSMD5:PSMC2:PSMC1:PSMD2 module which probably assembles with a PSMD10:PSMC4:PSMC5:PAAF1 module followed by dissociation of PSMD5. The chain is 26S proteasome non-ATPase regulatory subunit 5 (PSMD5) from Homo sapiens (Human).